A 1522-amino-acid polypeptide reads, in one-letter code: Lysophospholipase nte1 (1522 aa).

The tract at residues 1-24 (MADGVTQVDSTGLHSFSPSPSLSS) is disordered. Topologically, residues 1-65 (MADGVTQVDS…LPPVPTTMAG (65 aa)) are cytoplasmic. A compositionally biased stretch (low complexity) spans 15–24 (SFSPSPSLSS). The helical transmembrane segment at 66-86 (WIGWVFSFFFQVIPSVLYWII) threads the bilayer. At 87-108 (TFSTITLPTWLFTLFSMSLTFT) the chain is on the lumenal side. Residues 109 to 129 (MNFTTLLLIVLAVVSTISWFI) traverse the membrane as a helical segment. At 130–1522 (RYRFLNMYSR…RTLAPRRASI (1393 aa)) the chain is on the cytoplasmic side. Disordered stretches follow at residues 308-384 (VPNS…SVHP), 523-544 (RAAT…GVSP), and 757-776 (TTTA…SRRR). A compositionally biased stretch (basic residues) spans 369–381 (ESRKHSSRKRRKS). A nucleoside 3',5'-cyclic phosphate-binding positions include 680–800 (GGTS…AVAS) and 840–960 (RLTS…IAQR). In terms of domain architecture, PNPLA spans 1219–1383 (LVLGGGGARG…IDNLTVDHMK (165 aa)). Positions 1223-1228 (GGGARG) match the GXGXXG motif. Positions 1250–1254 (GTSIG) match the GXSXG motif. Catalysis depends on serine 1252, which acts as the Nucleophile. Aspartate 1370 (proton acceptor) is an active-site residue. The short motif at 1370–1372 (DGG) is the DGA/G element. Residues 1501–1522 (LPEETEEKKKLQRTLAPRRASI) are disordered.

It belongs to the NTE family.

Its subcellular location is the endoplasmic reticulum membrane. The enzyme catalyses a 1-acyl-sn-glycero-3-phosphocholine + H2O = sn-glycerol 3-phosphocholine + a fatty acid + H(+). Its activity is regulated as follows. Inhibited by organophosphorus esters. Functionally, intracellular phospholipase B that catalyzes the double deacylation of phosphatidylcholine (PC) to glycerophosphocholine (GroPCho). Plays an important role in membrane lipid homeostasis. Responsible for the rapid PC turnover in response to inositol, elevated temperatures, or when choline is present in the growth medium. The polypeptide is Lysophospholipase nte1 (nte1) (Aspergillus fumigatus (strain ATCC MYA-4609 / CBS 101355 / FGSC A1100 / Af293) (Neosartorya fumigata)).